Consider the following 370-residue polypeptide: Dual-specificity RNA methyltransferase RlmN (370 aa).

The active-site Proton acceptor is Glu-93. Residues 99–337 enclose the Radical SAM core domain; it reads EEGRGTLCVS…VTTVRKTRGD (239 aa). A disulfide bridge connects residues Cys-106 and Cys-343. Cys-113, Cys-117, and Cys-120 together coordinate [4Fe-4S] cluster. S-adenosyl-L-methionine-binding positions include 167-168, Ser-199, 221-223, and Asn-300; these read GE and SLH. Cys-343 serves as the catalytic S-methylcysteine intermediate.

This sequence belongs to the radical SAM superfamily. RlmN family. It depends on [4Fe-4S] cluster as a cofactor.

The protein resides in the cytoplasm. The enzyme catalyses adenosine(2503) in 23S rRNA + 2 reduced [2Fe-2S]-[ferredoxin] + 2 S-adenosyl-L-methionine = 2-methyladenosine(2503) in 23S rRNA + 5'-deoxyadenosine + L-methionine + 2 oxidized [2Fe-2S]-[ferredoxin] + S-adenosyl-L-homocysteine. It carries out the reaction adenosine(37) in tRNA + 2 reduced [2Fe-2S]-[ferredoxin] + 2 S-adenosyl-L-methionine = 2-methyladenosine(37) in tRNA + 5'-deoxyadenosine + L-methionine + 2 oxidized [2Fe-2S]-[ferredoxin] + S-adenosyl-L-homocysteine. Functionally, specifically methylates position 2 of adenine 2503 in 23S rRNA and position 2 of adenine 37 in tRNAs. m2A2503 modification seems to play a crucial role in the proofreading step occurring at the peptidyl transferase center and thus would serve to optimize ribosomal fidelity. The polypeptide is Dual-specificity RNA methyltransferase RlmN (Francisella tularensis subsp. holarctica (strain FTNF002-00 / FTA)).